We begin with the raw amino-acid sequence, 494 residues long: Probable cytosol aminopeptidase (494 aa).

Residues lysine 260 and aspartate 265 each coordinate Mn(2+). Lysine 272 is an active-site residue. Residues aspartate 283, aspartate 342, and glutamate 344 each coordinate Mn(2+). Residue arginine 346 is part of the active site.

This sequence belongs to the peptidase M17 family. The cofactor is Mn(2+).

The protein localises to the cytoplasm. It carries out the reaction Release of an N-terminal amino acid, Xaa-|-Yaa-, in which Xaa is preferably Leu, but may be other amino acids including Pro although not Arg or Lys, and Yaa may be Pro. Amino acid amides and methyl esters are also readily hydrolyzed, but rates on arylamides are exceedingly low.. The enzyme catalyses Release of an N-terminal amino acid, preferentially leucine, but not glutamic or aspartic acids.. Its function is as follows. Presumably involved in the processing and regular turnover of intracellular proteins. Catalyzes the removal of unsubstituted N-terminal amino acids from various peptides. The sequence is that of Probable cytosol aminopeptidase from Bacillus cereus (strain AH187).